A 507-amino-acid polypeptide reads, in one-letter code: Phosphoprotein (507 aa).

The interaction with N0 stretch occupies residues 1 to 48 (MAEEQARHVKNGLECIRALKAEPIGSLAIEEAMAAWSEISDNPGQERA). 4 disordered regions span residues 41–99 (DNPG…PPRN), 134–163 (GLDG…TEGY), 201–231 (NNFP…IKKG), and 250–273 (GATQ…GNVP). Residue Ser86 is modified to Phosphoserine. Over residues 134-145 (GLDGDSTLSGGD) the composition is skewed to low complexity. Acidic residues predominate over residues 146–160 (NESENSDVDIGEPDT). A Phosphoserine modification is found at Ser151. Low complexity predominate over residues 260 to 270 (SEPSGPGAPAG). Positions 304–376 (GDYYDDELFS…LSSIMIAIPG (73 aa)) are multimerization. 2 interaction with the L polymerase regions span residues 361-377 (STLE…IPGL) and 396-410 (PIIG…AEVL). A x domain (XD) region spans residues 457–507 (GPASRSVIRSIIKSSRLEEDRKRYLMTLLDDIKGANDLAKFHQMLMKIIMK). The interaction with the nucleocapsid (N-RNA) stretch occupies residues 459-507 (ASRSVIRSIIKSSRLEEDRKRYLMTLLDDIKGANDLAKFHQMLMKIIMK).

The protein belongs to the morbillivirus P protein family. As to quaternary structure, homotetramer. Interacts (via multimerization domain and XD domain) with polymerase L; this interaction forms the polymerase L-P complex. Interacts (via N-terminus) with N0 (via Ncore); this interaction allows P to chaperon N0 to avoid N polymerization and non-specific RNA binding before encapsidation. Interacts (via C-terminus) with N-RNA template (via Ntail); this interaction maintains the P/L complex anchored to the nucleocapsid template during the sequential transcription. Interacts (via C-terminus) with protein C this interaction allows C to associate with the ribonucleocapsid. Phosphorylation on serines by host CK2 is necessary for the formation of viral factories.

In terms of biological role, essential cofactor of the RNA polymerase L that plays a central role in the transcription and replication by forming the polymerase complex with RNA polymerase L and recruiting L to the genomic N-RNA template for RNA synthesis. Also plays a central role in the encapsidation of nascent RNA chains by forming the encapsidation complex with the nucleocapsid protein N (N-P complex). Acts as a chaperone for newly synthesized free N protein, so-called N0, allowing encapsidation of nascent RNA chains during replication. The nucleoprotein protein N prevents excessive phosphorylation of P, which leads to down-regulation of viral transcription/ replication. Participates, together with N, in the formation of viral factories (viroplasms), which are large inclusions in the host cytoplasm where replication takes place. The chain is Phosphoprotein (P/V) from Measles virus (strain Edmonston) (MeV).